The following is a 177-amino-acid chain: Interleukin-7 (177 aa).

Residues 1–25 (MFHVSFRYIFGLPPLILVLLPVASS) form the signal peptide. Disulfide bonds link Cys27/Cys166, Cys59/Cys154, and Cys72/Cys117. N-linked (GlcNAc...) asparagine glycosylation is found at Asn95, Asn116, and Asn141.

This sequence belongs to the IL-7/IL-9 family. As to quaternary structure, interacts with IL7R and CSF2RG.

It localises to the secreted. Hematopoietic cytokine that plays an essential role in the development, expansion, and survival of naive and memory T-cells and B-cells thereby regulating the number of mature lymphocytes and maintaining lymphoid homeostasis. Mechanistically, exerts its biological effects through a receptor composed of IL7RA subunit and the cytokine receptor common subunit gamma/CSF2RG. Binding to the receptor leads to activation of various kinases including JAK1 or JAK3 depending on the cell type and subsequently propagation of signals through activation of several downstream signaling pathways including the PI3K/Akt/mTOR or the JAK-STAT5. This is Interleukin-7 (IL7) from Homo sapiens (Human).